The sequence spans 778 residues: Ral guanine nucleotide dissociation stimulator-like 2 (778 aa).

The segment covering 1–15 has biased composition (low complexity); the sequence is MLPRPLRLLLDTTPP. The disordered stretch occupies residues 1–59; sequence MLPRPLRLLLDTTPPGGVVLSSFRSRDPEEGGDPGGRAVGGGQEEEDEEEEEASVSVWD. Positions 33-42 are enriched in gly residues; it reads DPGGRAVGGG. Residues 43 to 59 show a composition bias toward acidic residues; the sequence is QEEEDEEEEEASVSVWD. Residues 88–212 form the N-terminal Ras-GEF domain; the sequence is SSRRLRAGTL…GSADLIRNLR (125 aa). The 271-residue stretch at 243–513 folds into the Ras-GEF domain; it reads LADHLAEQLT…HRVSCEVEPP (271 aa). 4 disordered regions span residues 503-524, 541-564, 581-647, and 735-769; these read SHRVSCEVEPPGTSDSPAARTP, GGPTPLVSWDRPSVGGDEVPGTPA, SLDS…GPGS, and RRPSAATPGSHSGPSASGTPPSEGGGGSFPRIKAT. Positions 581-592 are enriched in low complexity; that stretch reads SLDSALESSPSL. The span at 620 to 632 shows a compositional bias: polar residues; it reads CGSPLSGNTGEGT. The region spanning 649–736 is the Ras-associating domain; the sequence is DCRIIRVQME…HDFLLRQRRR (88 aa). Low complexity predominate over residues 738 to 756; the sequence is SAATPGSHSGPSASGTPPS.

As to quaternary structure, interacts with SAMD9.

In terms of biological role, probable guanine nucleotide exchange factor. Putative effector of Ras and/or Rap. Associates with the GTP-bound form of Rap 1A and H-Ras in vitro. In Mus musculus (Mouse), this protein is Ral guanine nucleotide dissociation stimulator-like 2 (Rgl2).